We begin with the raw amino-acid sequence, 237 residues long: MQKQELLYKGKAKSVYETEDNDLLILHFRDDTSALDGKRIEQLARKGVVNNRFNAFIMQKLADAGIETHFEKQLSDDEVLVKRLDMIPVECVVRNFAAGSLVRRLGLEEGQALTPPTYELFYKDDALGDPMVNESISISLGWANDAQLVKMKELSHQVNEVLTALFDAGDLILVDFKLEFGVFHDRIVLGDEFSPDGCRIWDKATKKKLDKDRFRQSLGDVIEAYEEVASRIGVPLS.

Belongs to the SAICAR synthetase family.

The enzyme catalyses 5-amino-1-(5-phospho-D-ribosyl)imidazole-4-carboxylate + L-aspartate + ATP = (2S)-2-[5-amino-1-(5-phospho-beta-D-ribosyl)imidazole-4-carboxamido]succinate + ADP + phosphate + 2 H(+). The protein operates within purine metabolism; IMP biosynthesis via de novo pathway; 5-amino-1-(5-phospho-D-ribosyl)imidazole-4-carboxamide from 5-amino-1-(5-phospho-D-ribosyl)imidazole-4-carboxylate: step 1/2. In Psychrobacter cryohalolentis (strain ATCC BAA-1226 / DSM 17306 / VKM B-2378 / K5), this protein is Phosphoribosylaminoimidazole-succinocarboxamide synthase.